The primary structure comprises 732 residues: E3 ubiquitin-protein ligase RNF19B (732 aa).

The interval 1–109 (MGSEKDSESP…PEEDEAAEGG (109 aa)) is disordered. A required for ubiquitin ligase activity and for protection against staurosporin-induced cell death region spans residues 1–315 (MGSEKDSESP…VCGCEFCWLC (315 aa)). A compositionally biased stretch (pro residues) spans 54–71 (AEPPPPAAPPPPPPPAPA). Residues 72–99 (PVEAQAPPVEALPSEPAAEAEAEAVAAG) show a composition bias toward low complexity. The segment covering 100–109 (PEEDEAAEGG) has biased composition (acidic residues). The interval 112 to 334 (EEVECPLCLV…LSPSGCTFWG (223 aa)) is TRIAD supradomain. 14 residues coordinate Zn(2+): cysteine 116, cysteine 119, cysteine 139, cysteine 142, cysteine 203, cysteine 208, cysteine 225, cysteine 230, cysteine 235, cysteine 238, histidine 243, cysteine 248, cysteine 284, and cysteine 287. The RING-type 1 zinc finger occupies 116-165 (CPLCLVRLPPERAPRLLSCPHRSCRDCLRHYLRLEISESRVPISCPECSE). The IBR-type zinc finger occupies 183-248 (HKYEEFMLRR…KQIWHPNQTC (66 aa)). The RING-type 2; atypical zinc finger occupies 284–315 (CPRCSAYIIKMNDGSCNHMTCAVCGCEFCWLC). Residue cysteine 299 is part of the active site. 6 residues coordinate Zn(2+): cysteine 304, cysteine 307, cysteine 312, cysteine 315, histidine 323, and cysteine 330. The next 2 helical transmembrane spans lie at 351–371 (LIGAPVGISLIAGIAIPAMVI) and 412–432 (VIAAVSVGIGVPIMLAYVYGV). Disordered regions lie at residues 598 to 644 (QLVS…QSCE) and 660 to 732 (QPES…YEVE). Over residues 674–683 (QSDDVPDITS) the composition is skewed to acidic residues.

Belongs to the RBR family. RNF19 subfamily. Interacts with UBE2L3, UBE2L6 and UCKL1. In terms of tissue distribution, expressed specifically in natural killer cells, activated macrophages and cytotoxic T-cells. Present in macrophages (at protein level). Ubiquitously expressed with high expression in testis.

The protein resides in the cytoplasmic granule membrane. The protein localises to the endoplasmic reticulum membrane. It carries out the reaction [E2 ubiquitin-conjugating enzyme]-S-ubiquitinyl-L-cysteine + [acceptor protein]-L-lysine = [E2 ubiquitin-conjugating enzyme]-L-cysteine + [acceptor protein]-N(6)-ubiquitinyl-L-lysine.. It functions in the pathway protein modification; protein ubiquitination. In terms of biological role, E3 ubiquitin-protein ligase which accepts ubiquitin from E2 ubiquitin-conjugating enzymes UBE2L3 and UBE2L6 in the form of a thioester and then directly transfers the ubiquitin to targeted substrates, such as UCKL1. Involved in the cytolytic activity of natural killer cells and cytotoxic T-cells. Protects against staurosporin-induced cell death. In Mus musculus (Mouse), this protein is E3 ubiquitin-protein ligase RNF19B (Rnf19b).